We begin with the raw amino-acid sequence, 362 residues long: C-C chemokine receptor type 10 (362 aa).

The Extracellular portion of the chain corresponds to 1 to 52 (MGTEATEQVSWGHYSGDEEDAYSAEPLPELCYKADVQAFSRAFQPSVSLTVA). The helical transmembrane segment at 53–68 (ALGLAGNGLVLATHLA) threads the bilayer. At 69 to 78 (ARRAARSPTS) the chain is on the cytoplasmic side. A helical transmembrane segment spans residues 79-99 (AHLLQLALADLLLALTLPFAA). The Extracellular segment spans residues 100–114 (AGALQGWSLGSATCR). Cys113 and Cys191 are joined by a disulfide. A helical membrane pass occupies residues 115–136 (TISGLYSASFHAGFLFLACISA). Residues 137–159 (DRYVAIARALPAGPRPSTPGRAH) are Cytoplasmic-facing. The helical transmembrane segment at 160 to 179 (LVSVIVWLLSLLLALPALLF) threads the bilayer. Residues 180–203 (SQDGQREGQRRCRLIFPEGLTQTV) lie on the Extracellular side of the membrane. A helical membrane pass occupies residues 204 to 225 (KGASAVAQVALGFALPLGVMVA). The Cytoplasmic segment spans residues 226–247 (CYALLGRTLLAARGPERRRALR). A helical membrane pass occupies residues 248–269 (VVVALVAAFVVLQLPYSLALLL). Residues 270 to 290 (DTADLLAARERSCPASKRKDV) are Extracellular-facing. The chain crosses the membrane as a helical span at residues 291-313 (ALLVTSGLALARCGLNPVLYAFL). The Cytoplasmic portion of the chain corresponds to 314 to 362 (GLRFRQDLRRLLRGGSCPSGPQPRRGCPRRPRLSSCSAPTETHSLSWDN). The span at 328–338 (GSCPSGPQPRR) shows a compositional bias: low complexity. The interval 328–362 (GSCPSGPQPRRGCPRRPRLSSCSAPTETHSLSWDN) is disordered. Residues 351–362 (APTETHSLSWDN) are compositionally biased toward polar residues.

The protein belongs to the G-protein coupled receptor 1 family. Expressed at high levels in adult testis, small intestine, fetal lung, fetal kidney. Weaker expression was observed in many other adult tissues including spleen, thymus, lymph node, Peyer patches, colon, heart, ovary, peripheral blood lymphocytes, thyroid and spinal cord. Also expressed by melanocytes, dermal fibroblasts, dermal microvascular endothelial cells. Also detected in T-cells and in skin-derived Langerhans cells.

It is found in the cell membrane. Functionally, receptor for chemokines SCYA27 and SCYA28. Subsequently transduces a signal by increasing the intracellular calcium ions level and stimulates chemotaxis in a pre-B cell line. The chain is C-C chemokine receptor type 10 (CCR10) from Homo sapiens (Human).